Here is a 931-residue protein sequence, read N- to C-terminus: Protein translocase subunit SecA (931 aa).

Residues Q87, 105-109, and D523 each bind ATP; that span reads GEGKT. Residues C915, C917, C926, and H927 each contribute to the Zn(2+) site.

Belongs to the SecA family. Monomer and homodimer. Part of the essential Sec protein translocation apparatus which comprises SecA, SecYEG and auxiliary proteins SecDF-YajC and YidC. The cofactor is Zn(2+).

It localises to the cell inner membrane. The protein localises to the cytoplasm. The enzyme catalyses ATP + H2O + cellular proteinSide 1 = ADP + phosphate + cellular proteinSide 2.. Part of the Sec protein translocase complex. Interacts with the SecYEG preprotein conducting channel. Has a central role in coupling the hydrolysis of ATP to the transfer of proteins into and across the cell membrane, serving both as a receptor for the preprotein-SecB complex and as an ATP-driven molecular motor driving the stepwise translocation of polypeptide chains across the membrane. The protein is Protein translocase subunit SecA of Xanthobacter autotrophicus (strain ATCC BAA-1158 / Py2).